Reading from the N-terminus, the 517-residue chain is Amidophosphoribosyltransferase (517 aa).

Met1 carries the post-translational modification N-acetylmethionine. The propeptide occupies 1–11; sequence MELEELGIREE. Cys12 functions as the Nucleophile in the catalytic mechanism. A Glutamine amidotransferase type-2 domain is found at 12–261; it reads CGVFGCIASG…PGEIVEISRH (250 aa). Cys280 is a [4Fe-4S] cluster binding site. 3 residues coordinate Mg(2+): Ser327, Asp389, and Asp390. Residues Cys426, Cys503, and Cys506 each contribute to the [4Fe-4S] cluster site.

In the C-terminal section; belongs to the purine/pyrimidine phosphoribosyltransferase family. Homotetramer. Mg(2+) serves as cofactor. It depends on [4Fe-4S] cluster as a cofactor. Ubiquitously expressed.

It carries out the reaction 5-phospho-beta-D-ribosylamine + L-glutamate + diphosphate = 5-phospho-alpha-D-ribose 1-diphosphate + L-glutamine + H2O. It functions in the pathway purine metabolism; IMP biosynthesis via de novo pathway; N(1)-(5-phospho-D-ribosyl)glycinamide from 5-phospho-alpha-D-ribose 1-diphosphate: step 1/2. Its function is as follows. Catalyzes the formation of phosphoribosylamine from phosphoribosylpyrophosphate (PRPP) and glutamine. The protein is Amidophosphoribosyltransferase (PPAT) of Homo sapiens (Human).